Here is a 225-residue protein sequence, read N- to C-terminus: Two-component response regulator PhoP (225 aa).

Residues 2–116 form the Response regulatory domain; that stretch reads KLLVVEDEAL…ELEARLNALL (115 aa). Asp51 is modified (4-aspartylphosphate). The ompR/PhoB-type DNA-binding region spans 124–222; the sequence is QSTIEAGPLV…VRGQGYLFTE (99 aa).

Its function is as follows. Member of the two-component regulatory system PhoP/PhoQ that plays a role in the regulation of resistance towards polymyxin B and cationic antimicrobial peptides in response to limiting concentrations of Mg(2+). Functions as a transcriptional activator by direct binding to a cis-acting sequence upstream of the target gene promoters including oprH and pmrH promoters. The chain is Two-component response regulator PhoP (phoP) from Pseudomonas aeruginosa (strain ATCC 15692 / DSM 22644 / CIP 104116 / JCM 14847 / LMG 12228 / 1C / PRS 101 / PAO1).